We begin with the raw amino-acid sequence, 592 residues long: Aspartate--tRNA ligase (592 aa).

An L-aspartate-binding site is contributed by Glu173. The interval 197-200 (QLFK) is aspartate. Arg219 is an L-aspartate binding site. ATP is bound by residues 219–221 (RDE) and Gln228. His448 serves as a coordination point for L-aspartate. Glu482 provides a ligand contact to ATP. Arg489 is an L-aspartate binding site. Residue 534-537 (GLDR) coordinates ATP.

This sequence belongs to the class-II aminoacyl-tRNA synthetase family. Type 1 subfamily. In terms of assembly, homodimer.

The protein resides in the cytoplasm. The enzyme catalyses tRNA(Asp) + L-aspartate + ATP = L-aspartyl-tRNA(Asp) + AMP + diphosphate. Catalyzes the attachment of L-aspartate to tRNA(Asp) in a two-step reaction: L-aspartate is first activated by ATP to form Asp-AMP and then transferred to the acceptor end of tRNA(Asp). The chain is Aspartate--tRNA ligase from Shewanella baltica (strain OS195).